The following is a 260-amino-acid chain: MKANNHFKDFAWKKCLLGASVVALLVGCSPHIIETNEVALKLNYHPASEKVQALDEKILLLRPAFQYSDNIAKEYENKFKNQTALKVEQILQNQGYKVISVDSSDKDDLSFSQKKEGYLAVAMNGEIVLRPDPKRTIQKKSEPGLLFSTGLDKMEGVLIPAGFVKVTILEPMSGESLDSFTMDLSELDIQEKFLKTTHSSHSGGLVSTMVKGTDNSNDAIKSALNKIFANIMQEIDKKLTQKNLESYQKDAKELKGKRNR.

The signal sequence occupies residues 1–27 (MKANNHFKDFAWKKCLLGASVVALLVG). The N-palmitoyl cysteine moiety is linked to residue cysteine 28. Residue cysteine 28 is the site of S-diacylglycerol cysteine attachment.

The protein resides in the cell outer membrane. This Helicobacter pylori (strain ATCC 700392 / 26695) (Campylobacter pylori) protein is Neuraminyllactose-binding hemagglutinin (hpaA).